We begin with the raw amino-acid sequence, 477 residues long: Probable malate:quinone oxidoreductase (477 aa).

This sequence belongs to the MQO family. The cofactor is FAD.

The catalysed reaction is (S)-malate + a quinone = a quinol + oxaloacetate. Its pathway is carbohydrate metabolism; tricarboxylic acid cycle; oxaloacetate from (S)-malate (quinone route): step 1/1. In Synechococcus sp. (strain RCC307), this protein is Probable malate:quinone oxidoreductase.